The primary structure comprises 257 residues: Protein LigF (257 aa).

Positions 1-82 (MTLKLYSFGP…YLEDVFPESG (82 aa)) constitute a GST N-terminal domain. Positions 89–257 (DPFKRAEMRV…LLKRQNEKVA (169 aa)) constitute a GST C-terminal domain.

It belongs to the GST superfamily.

In terms of biological role, lignin degradation enzyme. The polypeptide is Protein LigF (ligF) (Sphingobium sp. (strain NBRC 103272 / SYK-6)).